The sequence spans 921 residues: Retinoblastoma-associated protein (921 aa).

Residues 1–36 (MPPKAPRRAAAAEPPPPPPPPPREDDPAQDSGPEEL) are disordered. Pro2 is modified (n,N-dimethylproline; by NTM1). Phosphoserine is present on residues Ser31 and Ser243. A phosphothreonine mark is found at Thr246, Thr350, Thr364, and Thr367. A disordered region spans residues 341–360 (PIDSFETERTPRKNNPDEEA). The span at 346–356 (ETERTPRKNNP) shows a compositional bias: basic and acidic residues. A domain A region spans residues 367–573 (TPVRTVMNTI…FDLIKQSKDG (207 aa)). Residues 367 to 764 (TPVRTVMNTI…QRLKTNILQY (398 aa)) form a pocket; binds T and E1A region. A Phosphoserine; by CDK2 modification is found at Ser561. A spacer region spans residues 574–632 (EGPDNLEPACPLSLPLQGNHTAADMYLSPLRSPKKRTSTTRVNSAANTETQAASAFHTQ). A phosphoserine mark is found at Ser601, Ser605, and Ser617. The interval 633–764 (KPLKSTSLAL…QRLKTNILQY (132 aa)) is domain B. Residues 756–921 (RLKTNILQYA…SKDVSNKEEK (166 aa)) form an interaction with LIMD1 region. A domain; mediates interaction with E4F1 region spans residues 764 to 921 (YASTRPPTLS…SKDVSNKEEK (158 aa)). Phosphoserine occurs at positions 773, 781, 788, and 800. The residue at position 803 (Lys803) is an N6-methyllysine; by SMYD2. Residue Ser804 is modified to Phosphoserine. A phosphothreonine mark is found at Thr814, Thr816, Thr819, and Thr834. Residue Ser848 is modified to Phosphoserine. Residue Lys853 is modified to N6-methyllysine; by SMYD2. Positions 853–869 (KRSAEGGNPPKPLKKLR) match the Bipartite nuclear localization signal motif. 2 positions are modified to N6-acetyllysine; by PCAF: Lys866 and Lys867. Residues 872–921 (IEGADEADGSKHLPAESKFQQKLAEMTSTRTRMQKQRMNESKDVSNKEEK) form a disordered region. Residues 908-921 (RMNESKDVSNKEEK) show a composition bias toward basic and acidic residues.

Belongs to the retinoblastoma protein (RB) family. In terms of assembly, the hypophosphorylated form interacts with and sequesters the E2F1 transcription factor, thereby inhibiting E2F1 transcription. Interacts with heterodimeric E2F/DP transcription factor complexes containing TFDP1 and either E2F1/E2F, E2F3, E2F4 or E2F5, or TFDP2 and E2F4. Interacts (when hyperphosphorylated and hypophosphorylated) with PKP3; the interaction inhibits RB1 interaction with and repression of the transcription factor E2F1, potentially via sequestering RB1 to the cytoplasm. The unphosphorylated form interacts with EID1, ARID3B, KDM5A, SUV39H1, MJD2A/JHDM3A and THOC1. Interacts with the N-terminal domain of TAF1. Interacts with SNW1, ATAD5, AATF, DNMT1, LIN9, LMNA, KMT5B, KMT5C, PELP1, UHRF2, TMPO-alpha and USP4. Interacts with GRIP1 and UBR4. Interacts with ARID4A and KDM5B. Interacts with E4F1 and LIMD1. Interacts with SMARCA4/BRG1 and HDAC1. Interacts with USP4. Interacts (when methylated at Lys-853) with L3MBTL1. Binds to CDK1 and CDK2. Interacts with CHEK2; phosphorylates RB1. Interacts with PRMT2. Interacts with CEBPA. P-TEFB complex interacts with RB1; promotes phosphorylation of RB1. Interacts with RBBP9; the interaction disrupts RB1 binding to E2F1. Interacts with KAT2B/PCAF and EP300/P300. Interacts with PAX5. Interacts (phosphorylated and unphosphorylated) with BLCAP. May interact with NDC80. (Microbial infection) Interacts with adenovirus E1a protein. As to quaternary structure, (Microbial infection) Interacts with SV40 large T antigen. In terms of processing, phosphorylated. Phosphorylated by CDK6 and CDK4, and subsequently by CDK2 at Ser-561 in G1, thereby releasing E2F1 which is then able to activate cell growth. Dephosphorylated at the late M phase. Phosphorylation of threonine residues in domain C promotes interaction between the C-terminal domain C and the Pocket domain, and thereby inhibits interactions with heterodimeric E2F/DP transcription factor complexes. Dephosphorylated at Ser-788 by calcineruin upon calcium stimulation. CDK3/cyclin-C-mediated phosphorylation at Ser-800 and Ser-804 is required for G0-G1 transition. Phosphorylated by CDK1 and CDK2 upon TGFB1-mediated apoptosis. Post-translationally, monomethylation at Lys-803 by SMYD2 enhances phosphorylation at Ser-800 and Ser-804, and promotes cell cycle progression. Monomethylation at Lys-853 by SMYD2 promotes interaction with L3MBTL1. N-terminus is methylated by METTL11A/NTM1. Acetylated in the skin. Acetylation at Lys-866 and Lys-867 regulates subcellular localization during keratinocytes differentiation. In terms of tissue distribution, expressed in the cell nuclei of renal tubules, hepatocytes and skeletal muscles. Expressed in skin (at protein level).

The protein resides in the nucleus. Its subcellular location is the cytoplasm. Its function is as follows. Tumor suppressor that is a key regulator of the G1/S transition of the cell cycle. The hypophosphorylated form binds transcription regulators of the E2F family, preventing transcription of E2F-responsive genes. Both physically blocks E2Fs transactivating domain and recruits chromatin-modifying enzymes that actively repress transcription. Cyclin and CDK-dependent phosphorylation of RB1 induces its dissociation from E2Fs, thereby activating transcription of E2F responsive genes and triggering entry into S phase. RB1 also promotes the G0-G1 transition upon phosphorylation and activation by CDK3/cyclin-C. Directly involved in heterochromatin formation by maintaining overall chromatin structure and, in particular, that of constitutive heterochromatin by stabilizing histone methylation. Recruits and targets histone methyltransferases SUV39H1, KMT5B and KMT5C, leading to epigenetic transcriptional repression. Controls histone H4 'Lys-20' trimethylation. Inhibits the intrinsic kinase activity of TAF1. Mediates transcriptional repression by SMARCA4/BRG1 by recruiting a histone deacetylase (HDAC) complex to the c-FOS promoter. In resting neurons, transcription of the c-FOS promoter is inhibited by BRG1-dependent recruitment of a phospho-RB1-HDAC1 repressor complex. Upon calcium influx, RB1 is dephosphorylated by calcineurin, which leads to release of the repressor complex. The chain is Retinoblastoma-associated protein (Rb1) from Mus musculus (Mouse).